The primary structure comprises 440 residues: Homocitrate synthase, mitochondrial (440 aa).

The segment covering 1 to 23 has biased composition (polar residues); that stretch reads MSENNEFQSVTESTTAPTTSNPY. The disordered stretch occupies residues 1–27; sequence MSENNEFQSVTESTTAPTTSNPYGPNP. The 254-residue stretch at 37–290 folds into the Pyruvate carboxyltransferase domain; that stretch reads FQLIDSTLRE…RSKYKLHKIR (254 aa). Residue Arg45 participates in 2-oxoglutarate binding. Glu46 serves as a coordination point for Mg(2+). The 2-oxoglutarate site is built by His105, Arg165, and Thr199. Mg(2+) contacts are provided by His226 and His228. The active-site Proton acceptor is the His323. The residue at position 399 (Ser399) is a Phosphoserine. The residue at position 410 (Thr410) is a Phosphothreonine.

Belongs to the alpha-IPM synthase/homocitrate synthase family. Homocitrate synthase LYS20/LYS21 subfamily. It depends on Mg(2+) as a cofactor. Mn(2+) is required as a cofactor.

It is found in the mitochondrion. It carries out the reaction acetyl-CoA + 2-oxoglutarate + H2O = (2R)-homocitrate + CoA + H(+). It participates in amino-acid biosynthesis; L-lysine biosynthesis via AAA pathway; L-alpha-aminoadipate from 2-oxoglutarate: step 1/5. Functionally, catalyzes the aldol-type condensation of 2-oxoglutarate with acetyl-CoA to yield homocitrate. Carries out the first step of the alpha-aminoadipate (AAA) lysine biosynthesis pathway. This chain is Homocitrate synthase, mitochondrial (LYS21), found in Saccharomyces cerevisiae (strain ATCC 204508 / S288c) (Baker's yeast).